A 137-amino-acid chain; its full sequence is Chaperone protein YscB (137 aa).

As to quaternary structure, interacts with SycN to form a complex which specifically binds to YopN.

It is found in the cytoplasm. Its subcellular location is the cell inner membrane. Functionally, functions as a specific chaperone for YopN. It could facilitate the secretion and the subsequent translocation of YopN. This chain is Chaperone protein YscB (yscB), found in Yersinia pestis.